A 347-amino-acid polypeptide reads, in one-letter code: D-alanine--D-alanine ligase (347 aa).

The ATP-grasp domain maps to 138-339 (KILCSHAGIP…YSQVIETILA (202 aa)). 171-226 (SDRFTFPLFVKPVDAGSSFGCTFVDFFEQLPVAIEHALQHGKSAIVEPALDAPEVF) is an ATP binding site. Mg(2+) is bound by residues Asp296, Glu308, and Asn310.

The protein belongs to the D-alanine--D-alanine ligase family. It depends on Mg(2+) as a cofactor. The cofactor is Mn(2+).

Its subcellular location is the cytoplasm. The catalysed reaction is 2 D-alanine + ATP = D-alanyl-D-alanine + ADP + phosphate + H(+). Its pathway is cell wall biogenesis; peptidoglycan biosynthesis. In terms of biological role, cell wall formation. This Tropheryma whipplei (strain Twist) (Whipple's bacillus) protein is D-alanine--D-alanine ligase.